The following is a 303-amino-acid chain: Bifunctional protein FolD (303 aa).

Residues 168–170 (GRS), Thr197, and Val238 each bind NADP(+).

It belongs to the tetrahydrofolate dehydrogenase/cyclohydrolase family. In terms of assembly, homodimer.

The catalysed reaction is (6R)-5,10-methylene-5,6,7,8-tetrahydrofolate + NADP(+) = (6R)-5,10-methenyltetrahydrofolate + NADPH. The enzyme catalyses (6R)-5,10-methenyltetrahydrofolate + H2O = (6R)-10-formyltetrahydrofolate + H(+). It participates in one-carbon metabolism; tetrahydrofolate interconversion. Functionally, catalyzes the oxidation of 5,10-methylenetetrahydrofolate to 5,10-methenyltetrahydrofolate and then the hydrolysis of 5,10-methenyltetrahydrofolate to 10-formyltetrahydrofolate. The polypeptide is Bifunctional protein FolD (Desulfosudis oleivorans (strain DSM 6200 / JCM 39069 / Hxd3) (Desulfococcus oleovorans)).